The following is a 709-amino-acid chain: Protein SOSEKI 3 (709 aa).

Residues serine 8–aspartate 101 form a DIX-like oligomerization domain region. 5 disordered regions span residues leucine 242–methionine 266, arginine 315–serine 344, glycine 358–cysteine 393, proline 411–serine 439, and aspartate 506–proline 560. Positions glutamate 329–glutamate 342 are enriched in basic and acidic residues. Basic and acidic residues predominate over residues asparagine 417–asparagine 436. The span at valine 529 to proline 544 shows a compositional bias: polar residues. The C2HC/C3H-type zinc finger occupies isoleucine 663–alanine 692. Zn(2+)-binding residues include cysteine 667, cysteine 670, histidine 682, and cysteine 686.

It belongs to the SOSEKI family. As to quaternary structure, homodimer. Forms long polymer filaments with other SOKs proteins polymers crucial for polar localization and biological activity. Zn(2+) is required as a cofactor.

The protein resides in the cell membrane. SOSEKI proteins locally interpret global polarity cues and can influence cell division orientation to coordinate cell polarization relative to body axes. The sequence is that of Protein SOSEKI 3 from Physcomitrium patens (Spreading-leaved earth moss).